The chain runs to 90 residues: Small ribosomal subunit protein bS18 (90 aa).

It belongs to the bacterial ribosomal protein bS18 family. Part of the 30S ribosomal subunit. Forms a tight heterodimer with protein bS6.

Binds as a heterodimer with protein bS6 to the central domain of the 16S rRNA, where it helps stabilize the platform of the 30S subunit. This is Small ribosomal subunit protein bS18 from Bacteroides thetaiotaomicron (strain ATCC 29148 / DSM 2079 / JCM 5827 / CCUG 10774 / NCTC 10582 / VPI-5482 / E50).